A 340-amino-acid polypeptide reads, in one-letter code: Proline-rich transmembrane protein 2 (340 aa).

Positions 1–261 are disordered; it reads MAASSSEISE…AGPGVEGGEG (261 aa). Topologically, residues 1-268 are cytoplasmic; it reads MAASSSEISE…GEGTQKPRDY (268 aa). Residue serine 28 is modified to Phosphoserine. Phosphothreonine is present on threonine 74. Pro residues-rich tracts occupy residues 131-155 and 197-207; these read PPEP…PKPA and APEPHSPPSKK. Serine 238 bears the Phosphoserine mark. Omega-N-methylarginine is present on arginine 240. 2 positions are modified to phosphoserine: serine 248 and serine 249. Residues 269-289 constitute an intramembrane region (helical); that stretch reads IILAILSCFCPMWPVNIVAFA. The Cytoplasmic segment spans residues 290–317; it reads YAVMSRNSLQQGDVDGAQRLGRVAKLLS. A helical transmembrane segment spans residues 318–338; the sequence is IVALVGGVLIIIASCVINLGV. The Extracellular portion of the chain corresponds to 339–340; that stretch reads YK.

Belongs to the CD225/Dispanin family. Component of the outer core of AMPAR complex. AMPAR complex consists of an inner core made of 4 pore-forming GluA/GRIA proteins (GRIA1, GRIA2, GRIA3 and GRIA4) and 4 major auxiliary subunits arranged in a twofold symmetry. One of the two pairs of distinct binding sites is occupied either by CNIH2, CNIH3 or CACNG2, CACNG3. The other harbors CACNG2, CACNG3, CACNG4, CACNG8 or GSG1L. This inner core of AMPAR complex is complemented by outer core constituents binding directly to the GluA/GRIA proteins at sites distinct from the interaction sites of the inner core constituents. Outer core constituents include at least PRRT1, PRRT2, CKAMP44/SHISA9, FRRS1L and NRN1. The proteins of the inner and outer core serve as a platform for other, more peripherally associated AMPAR constituents. Alone or in combination, these auxiliary subunits control the gating and pharmacology of the AMPAR complex and profoundly impact their biogenesis and protein processing. Interacts with intersectin 1/ITSN1. Interacts with SNARE complex components, including SNAP25, STX1A, SYT1 and SYT2; this interaction may inhibit SNARE complex formation.

Its subcellular location is the cell membrane. It localises to the presynaptic cell membrane. The protein resides in the synapse. It is found in the cell projection. The protein localises to the axon. Its subcellular location is the cytoplasmic vesicle. It localises to the secretory vesicle. The protein resides in the synaptic vesicle membrane. It is found in the postsynaptic density membrane. The protein localises to the dendritic spine. Functionally, as a component of the outer core of AMPAR complex, may be involved in synaptic transmission in the central nervous system. In hippocampal neurons, in presynaptic terminals, plays an important role in the final steps of neurotransmitter release, possibly by regulating Ca(2+)-sensing. In the cerebellum, may inhibit SNARE complex formation and down-regulate short-term facilitation. The chain is Proline-rich transmembrane protein 2 (PRRT2) from Pongo abelii (Sumatran orangutan).